The primary structure comprises 429 residues: Enolase (429 aa).

Q163 serves as a coordination point for (2R)-2-phosphoglycerate. E205 acts as the Proton donor in catalysis. D242, E287, and D314 together coordinate Mg(2+). Residues K339, R368, S369, and K390 each contribute to the (2R)-2-phosphoglycerate site. Catalysis depends on K339, which acts as the Proton acceptor.

Belongs to the enolase family. Mg(2+) is required as a cofactor.

The protein resides in the cytoplasm. Its subcellular location is the secreted. It is found in the cell surface. It catalyses the reaction (2R)-2-phosphoglycerate = phosphoenolpyruvate + H2O. It participates in carbohydrate degradation; glycolysis; pyruvate from D-glyceraldehyde 3-phosphate: step 4/5. Its function is as follows. Catalyzes the reversible conversion of 2-phosphoglycerate (2-PG) into phosphoenolpyruvate (PEP). It is essential for the degradation of carbohydrates via glycolysis. This chain is Enolase, found in Salinibacter ruber (strain DSM 13855 / M31).